Consider the following 571-residue polypeptide: Glutamine--tRNA ligase (571 aa).

Residues 35 to 45 (PEPNGYLHIGH) carry the 'HIGH' region motif. Residues 36 to 38 (EPN) and 42 to 48 (HIGHAKS) contribute to the ATP site. The L-glutamine site is built by aspartate 68 and tyrosine 213. ATP contacts are provided by residues threonine 232, 262-263 (RL), and 270-272 (LSK). Residues 269-273 (ILSKR) carry the 'KMSKS' region motif.

It belongs to the class-I aminoacyl-tRNA synthetase family. In terms of assembly, monomer.

Its subcellular location is the cytoplasm. It catalyses the reaction tRNA(Gln) + L-glutamine + ATP = L-glutaminyl-tRNA(Gln) + AMP + diphosphate. The sequence is that of Glutamine--tRNA ligase from Buchnera aphidicola subsp. Acyrthosiphon pisum (strain Tuc7).